The following is a 1381-amino-acid chain: DNA-directed RNA polymerase subunit beta (1381 aa).

It belongs to the RNA polymerase beta chain family. The RNAP catalytic core consists of 2 alpha, 1 beta, 1 beta' and 1 omega subunit. When a sigma factor is associated with the core the holoenzyme is formed, which can initiate transcription.

It carries out the reaction RNA(n) + a ribonucleoside 5'-triphosphate = RNA(n+1) + diphosphate. Its function is as follows. DNA-dependent RNA polymerase catalyzes the transcription of DNA into RNA using the four ribonucleoside triphosphates as substrates. The sequence is that of DNA-directed RNA polymerase subunit beta from Sulfurimonas denitrificans (strain ATCC 33889 / DSM 1251) (Thiomicrospira denitrificans (strain ATCC 33889 / DSM 1251)).